The sequence spans 108 residues: UPF0235 protein MM_0822 (108 aa).

This sequence belongs to the UPF0235 family.

This is UPF0235 protein MM_0822 from Methanosarcina mazei (strain ATCC BAA-159 / DSM 3647 / Goe1 / Go1 / JCM 11833 / OCM 88) (Methanosarcina frisia).